The following is a 136-amino-acid chain: Histone H2B.5 (136 aa).

Over residues 1–36 (MAPKAEKKPAAEKKPVETEKKPKAEKRVPGKDGGAD) the composition is skewed to basic and acidic residues. A disordered region spans residues 1-44 (MAPKAEKKPAAEKKPVETEKKPKAEKRVPGKDGGADKKKKKAKK). An N6-acetyllysine mark is found at lysine 7 and lysine 26. Residue lysine 132 forms a Glycyl lysine isopeptide (Lys-Gly) (interchain with G-Cter in ubiquitin) linkage.

This sequence belongs to the histone H2B family. The nucleosome is a histone octamer containing two molecules each of H2A, H2B, H3 and H4 assembled in one H3-H4 heterotetramer and two H2A-H2B heterodimers. The octamer wraps approximately 147 bp of DNA. In terms of processing, can be acetylated to form H2BK6ac and H2BK33ac. Post-translationally, monoubiquitinated to form H2BK143ub1; may give a specific tag for epigenetic transcriptional activation.

The protein localises to the nucleus. It is found in the chromosome. Its function is as follows. Core component of nucleosome. Nucleosomes wrap and compact DNA into chromatin, limiting DNA accessibility to the cellular machineries which require DNA as a template. Histones thereby play a central role in transcription regulation, DNA repair, DNA replication and chromosomal stability. DNA accessibility is regulated via a complex set of post-translational modifications of histones, also called histone code, and nucleosome remodeling. The polypeptide is Histone H2B.5 (Triticum aestivum (Wheat)).